Consider the following 42-residue polypeptide: Protein YkgS (42 aa).

The protein is Protein YkgS (ykgS) of Escherichia coli (strain K12).